We begin with the raw amino-acid sequence, 475 residues long: F-box protein At3g59150 (475 aa).

Positions 12 to 58 (GDVISNLPNDLLCRILSYLSTKEAALTSILSKRWSNLLLSIPILDFD) constitute an F-box domain.

The chain is F-box protein At3g59150 from Arabidopsis thaliana (Mouse-ear cress).